A 464-amino-acid polypeptide reads, in one-letter code: Propanal dehydrogenase (CoA-propanoylating) (464 aa).

The interval 1-18 is targets protein to the BMC; sequence MNTSELETLIRTILSEQL.

Belongs to the EutE/PduP family. In terms of assembly, interacts with BMC shell proteins PduA and PduJ, which target this protein to BMC. Interacts with PduQ, probably via the N-terminus of PduQ. Interacts with PduK, probably with its BMC-containing N-terminus.

The protein localises to the bacterial microcompartment. It catalyses the reaction propanal + NAD(+) + CoA = propanoyl-CoA + NADH + H(+). It functions in the pathway polyol metabolism; 1,2-propanediol degradation. Its function is as follows. A CoA-acylating aldehyde dehydrogenase required for optimal 1,2-propanediol (1,2-PD) degradation. Optimizes growth in the bacterial microcompartment (BMC) dedicated to 1,2-PD degradation by minimizing propionaldehyde toxicity. Directly targeted to the BMC. NAD(+) and NADH are regenerated internally within the Pdu BMC by the PduP and PduQ enzymes, which reduce NAD(+) and oxidize NADH respectively, although there must also be cofactor transport across the BMC. The 1,2-PD-specific bacterial microcompartment (BMC) concentrates low levels of 1,2-PD catabolic enzymes, concentrates volatile reaction intermediates thus enhancing pathway flux and keeps the level of toxic, mutagenic propionaldehyde low. The sequence is that of Propanal dehydrogenase (CoA-propanoylating) from Salmonella typhimurium (strain LT2 / SGSC1412 / ATCC 700720).